The primary structure comprises 137 residues: SPbeta prophage-derived uncharacterized protein YoqU (137 aa).

This is SPbeta prophage-derived uncharacterized protein YoqU (yoqU) from Bacillus subtilis (strain 168).